The sequence spans 224 residues: Putative O-methyltransferase MMAR_4217 (224 aa).

The segment covering 1-11 has biased composition (polar residues); the sequence is MHGTDSSSDTP. Residues 1–20 are disordered; the sequence is MHGTDSSSDTPGQPAPSRAE. S-adenosyl-L-methionine-binding positions include V51, E73, 75 to 76, S81, D99, and I100; that span reads GT. Residue D147 coordinates substrate. An S-adenosyl-L-methionine-binding site is contributed by D149.

It belongs to the class I-like SAM-binding methyltransferase superfamily. Cation-dependent O-methyltransferase family.

The protein is Putative O-methyltransferase MMAR_4217 of Mycobacterium marinum (strain ATCC BAA-535 / M).